The chain runs to 72 residues: Small ribosomal subunit protein bS18c (72 aa).

It belongs to the bacterial ribosomal protein bS18 family. In terms of assembly, part of the 30S ribosomal subunit.

It is found in the plastid. It localises to the chloroplast. The chain is Small ribosomal subunit protein bS18c from Thalassiosira pseudonana (Marine diatom).